A 144-amino-acid chain; its full sequence is Phosphomevalonate dehydratase small subunit (144 aa).

Residue Ser65 is the Proton acceptor of the active site.

Belongs to the AcnX type II small subunit family. Heterodimer composed of a large subunit (PMDh-L) and a small subunit (PMDh-S).

It catalyses the reaction (R)-5-phosphomevalonate = (2E)-3-methyl-5-phosphooxypent-2-enoate + H2O. It participates in isoprenoid biosynthesis; isopentenyl diphosphate biosynthesis via mevalonate pathway. Functionally, component of a hydro-lyase that catalyzes the dehydration of mevalonate 5-phosphate (MVA5P) to form trans-anhydromevalonate 5-phosphate (tAHMP). Involved in the archaeal mevalonate (MVA) pathway, which provides fundamental precursors for isoprenoid biosynthesis, such as isopentenyl diphosphate (IPP) and dimethylallyl diphosphate (DMAPP). The chain is Phosphomevalonate dehydratase small subunit from Methanosarcina acetivorans (strain ATCC 35395 / DSM 2834 / JCM 12185 / C2A).